A 207-amino-acid chain; its full sequence is N-(5'-phosphoribosyl)anthranilate isomerase (207 aa).

It belongs to the TrpF family.

It catalyses the reaction N-(5-phospho-beta-D-ribosyl)anthranilate = 1-(2-carboxyphenylamino)-1-deoxy-D-ribulose 5-phosphate. Its pathway is amino-acid biosynthesis; L-tryptophan biosynthesis; L-tryptophan from chorismate: step 3/5. In Halorhodospira halophila (strain DSM 244 / SL1) (Ectothiorhodospira halophila (strain DSM 244 / SL1)), this protein is N-(5'-phosphoribosyl)anthranilate isomerase.